The following is a 159-amino-acid chain: Phosphopantetheine adenylyltransferase (159 aa).

Ser9 contributes to the substrate binding site. Residues Ser9 to Phe10 and His17 contribute to the ATP site. Residues Lys41, Leu73, and Lys87 each contribute to the substrate site. Residues Gly88–Arg90, Glu98, and Tyr123–Ser129 contribute to the ATP site.

Belongs to the bacterial CoaD family. As to quaternary structure, homohexamer. Mg(2+) is required as a cofactor.

The protein resides in the cytoplasm. The catalysed reaction is (R)-4'-phosphopantetheine + ATP + H(+) = 3'-dephospho-CoA + diphosphate. It functions in the pathway cofactor biosynthesis; coenzyme A biosynthesis; CoA from (R)-pantothenate: step 4/5. Its function is as follows. Reversibly transfers an adenylyl group from ATP to 4'-phosphopantetheine, yielding dephospho-CoA (dPCoA) and pyrophosphate. The protein is Phosphopantetheine adenylyltransferase of Clostridium botulinum (strain Eklund 17B / Type B).